A 157-amino-acid chain; its full sequence is uncharacterized protein (157 aa).

Lys115 is covalently cross-linked (Isoglutamyl lysine isopeptide (Lys-Gln) (interchain with Q-Cter in protein Pup)).

This is an uncharacterized protein from Mycolicibacterium smegmatis (strain ATCC 700084 / mc(2)155) (Mycobacterium smegmatis).